A 425-amino-acid polypeptide reads, in one-letter code: Glutamyl-tRNA reductase (425 aa).

Residues 49–52 (TCNR), S109, 114–116 (EGQ), and Q120 contribute to the substrate site. C50 (nucleophile) is an active-site residue. Residue 189–194 (GAGETG) coordinates NADP(+).

The protein belongs to the glutamyl-tRNA reductase family. Homodimer.

It carries out the reaction (S)-4-amino-5-oxopentanoate + tRNA(Glu) + NADP(+) = L-glutamyl-tRNA(Glu) + NADPH + H(+). It participates in porphyrin-containing compound metabolism; protoporphyrin-IX biosynthesis; 5-aminolevulinate from L-glutamyl-tRNA(Glu): step 1/2. It functions in the pathway porphyrin-containing compound metabolism; chlorophyll biosynthesis. Catalyzes the NADPH-dependent reduction of glutamyl-tRNA(Glu) to glutamate 1-semialdehyde (GSA). This chain is Glutamyl-tRNA reductase, found in Chlorobium phaeovibrioides (strain DSM 265 / 1930) (Prosthecochloris vibrioformis (strain DSM 265)).